A 302-amino-acid chain; its full sequence is 5'-3' exonuclease (302 aa).

Positions 173-269 (IPKLIPDLLG…NITTKKIKML (97 aa)) constitute a 5'-3' exonuclease domain.

5'-3' exonuclease acting preferentially on double-stranded DNA. This Buchnera aphidicola subsp. Baizongia pistaciae (strain Bp) protein is 5'-3' exonuclease (pol).